A 456-amino-acid polypeptide reads, in one-letter code: Nitrogenase molybdenum-iron protein beta chain (456 aa).

Residues Cys-23, Cys-48, Cys-106, and Ser-141 each coordinate [8Fe-7S] cluster.

This sequence belongs to the NifD/NifK/NifE/NifN family. Tetramer of two alpha and two beta chains. Forms complex with the iron protein (nitrogenase component 2). The cofactor is [8Fe-7S] cluster.

The enzyme catalyses N2 + 8 reduced [2Fe-2S]-[ferredoxin] + 16 ATP + 16 H2O = H2 + 8 oxidized [2Fe-2S]-[ferredoxin] + 2 NH4(+) + 16 ADP + 16 phosphate + 6 H(+). In terms of biological role, this molybdenum-iron protein is part of the nitrogenase complex that catalyzes the key enzymatic reactions in nitrogen fixation. The protein is Nitrogenase molybdenum-iron protein beta chain (nifK2) of Methanosarcina barkeri.